The primary structure comprises 369 residues: Histidinol-phosphate aminotransferase 2 (369 aa).

Position 231 is an N6-(pyridoxal phosphate)lysine (K231).

Belongs to the class-II pyridoxal-phosphate-dependent aminotransferase family. Histidinol-phosphate aminotransferase subfamily. In terms of assembly, homodimer. Pyridoxal 5'-phosphate is required as a cofactor.

It catalyses the reaction L-histidinol phosphate + 2-oxoglutarate = 3-(imidazol-4-yl)-2-oxopropyl phosphate + L-glutamate. It functions in the pathway amino-acid biosynthesis; L-histidine biosynthesis; L-histidine from 5-phospho-alpha-D-ribose 1-diphosphate: step 7/9. The protein is Histidinol-phosphate aminotransferase 2 of Legionella pneumophila (strain Lens).